A 196-amino-acid polypeptide reads, in one-letter code: Molybdenum cofactor guanylyltransferase (196 aa).

GTP contacts are provided by residues 10–12, K23, N51, D69, and D99; that span reads LAG. D99 provides a ligand contact to Mg(2+).

Belongs to the MobA family. As to quaternary structure, monomer. It depends on Mg(2+) as a cofactor.

It is found in the cytoplasm. The catalysed reaction is Mo-molybdopterin + GTP + H(+) = Mo-molybdopterin guanine dinucleotide + diphosphate. Its function is as follows. Transfers a GMP moiety from GTP to Mo-molybdopterin (Mo-MPT) cofactor (Moco or molybdenum cofactor) to form Mo-molybdopterin guanine dinucleotide (Mo-MGD) cofactor. The polypeptide is Molybdenum cofactor guanylyltransferase (Shewanella frigidimarina (strain NCIMB 400)).